Reading from the N-terminus, the 384-residue chain is Zinc transporter 7 (384 aa).

An N-terminal signal peptide occupies residues 1-25 (MERFVQFLRRGNGLMAASLAAGSCA). The Extracellular portion of the chain corresponds to 26-46 (EEVAKAEGAGCRDDAAALRLK). The helical transmembrane segment at 47-67 (GVAMATILVAGVVGVGLPLAG) threads the bilayer. Residues 68-79 (RKRRALRTDSAA) are Cytoplasmic-facing. Residues 80 to 100 (FVAAKAFAAGVILATGFVHML) traverse the membrane as a helical segment. Residues 101–119 (HDAEHALSSPCLPAHPWRS) lie on the Extracellular side of the membrane. Residues 120–140 (FPFPGFVAMSAALATLVLDFL) traverse the membrane as a helical segment. Over 141–227 (ATRFYEGKHR…GEGEVPAQVR (87 aa)) the chain is Cytoplasmic. Positions 185–222 (DNKAPLLQPHSHSHSHPHGHGHGHELAQPEGSGGEGEV) are disordered. Residues 195–205 (SHSHSHPHGHG) are compositionally biased toward basic residues. Residues 228–248 (SVVVSQILEMGIVSHSVIIGL) form a helical membrane-spanning segment. Over 249–261 (SLGVSRSPCTIRP) the chain is Extracellular. A helical membrane pass occupies residues 262 to 282 (LVAALSFHQFFEGFALGGCIA). The Cytoplasmic portion of the chain corresponds to 283-291 (QAQFKTLSA). The helical transmembrane segment at 292 to 312 (AIMACFFAITTPAGIAAGAGV) threads the bilayer. The Extracellular segment spans residues 313–323 (ASFYNANSPRA). The helical transmembrane segment at 324-344 (LVVEGILDSVSAGILIYMSLV) threads the bilayer. Residues 345–363 (DLIAADFLGGKMTGSTRQQ) lie on the Cytoplasmic side of the membrane. The chain crosses the membrane as a helical span at residues 364 to 384 (VMAYIALFLGALSMSSLAIWA).

It belongs to the ZIP transporter (TC 2.A.5) family.

Its subcellular location is the cell membrane. Functionally, zinc transporter that may be involved in zinc uptake from the rhizosphere. This is Zinc transporter 7 (ZIP7) from Oryza sativa subsp. japonica (Rice).